The chain runs to 1059 residues: Zinc finger protein 865 (1059 aa).

3 disordered regions span residues Met-1–Val-24, Leu-58–Phe-142, and Asn-161–Thr-206. The segment covering Ser-8–Glu-21 has biased composition (gly residues). Residues Ala-61–Asp-78 are compositionally biased toward pro residues. The span at Ser-93–Ala-119 shows a compositional bias: low complexity. Pro residues-rich tracts occupy residues Pro-124–Leu-137 and Ala-183–Pro-198. C2H2-type zinc fingers lie at residues Phe-224–His-246 and Tyr-252–His-274. The segment at Lys-275–Ala-342 is disordered. Residues Ala-281–Leu-296 show a composition bias toward pro residues. Composition is skewed to low complexity over residues Pro-297–Pro-316 and Ala-324–Gly-337. C2H2-type zinc fingers lie at residues Phe-350 to His-372, Phe-378 to His-400, Leu-407 to His-429, and Tyr-441 to His-463. The interval Ala-461–Ser-503 is disordered. The segment covering His-463–Ala-480 has biased composition (low complexity). Residues Pro-481–Pro-499 are compositionally biased toward pro residues. 5 C2H2-type zinc fingers span residues Phe-550–His-572, His-578–His-600, Tyr-606–His-628, Tyr-669–His-691, and Tyr-697–His-719. The tract at residues Leu-726–Ser-747 is disordered. C2H2-type zinc fingers lie at residues Phe-792–His-814, Leu-820–His-842, Phe-848–His-870, Tyr-876–His-898, Phe-904–His-926, Gln-932–His-954, Tyr-960–His-982, Leu-989–His-1011, and Phe-1017–His-1039. Lys-802 participates in a covalent cross-link: Glycyl lysine isopeptide (Lys-Gly) (interchain with G-Cter in SUMO2). Residue Lys-1040 forms a Glycyl lysine isopeptide (Lys-Gly) (interchain with G-Cter in SUMO2) linkage.

This sequence belongs to the krueppel C2H2-type zinc-finger protein family.

Its subcellular location is the nucleus. Functionally, may be involved in transcriptional regulation. The chain is Zinc finger protein 865 (ZNF865) from Homo sapiens (Human).